The chain runs to 189 residues: Large ribosomal subunit protein uL13 (189 aa).

It belongs to the universal ribosomal protein uL13 family.

This is Large ribosomal subunit protein uL13 (rpl13a) from Salmo trutta (Brown trout).